The following is a 144-amino-acid chain: Large ribosomal subunit protein uL15 (144 aa).

The disordered stretch occupies residues 1-44 (MKLNELMPSEGSRTNRKRIGRGTSSGTGKTAGRGQKGQKARGKV). Residues 23–35 (TSSGTGKTAGRGQ) are compositionally biased toward gly residues.

The protein belongs to the universal ribosomal protein uL15 family. Part of the 50S ribosomal subunit.

Functionally, binds to the 23S rRNA. The chain is Large ribosomal subunit protein uL15 from Pediococcus pentosaceus (strain ATCC 25745 / CCUG 21536 / LMG 10740 / 183-1w).